The following is a 295-amino-acid chain: Acetylglutamate kinase (295 aa).

Substrate-binding positions include 66–67, Arg88, and Asn193; that span reads GG.

Belongs to the acetylglutamate kinase family. ArgB subfamily.

The protein resides in the cytoplasm. It carries out the reaction N-acetyl-L-glutamate + ATP = N-acetyl-L-glutamyl 5-phosphate + ADP. It participates in amino-acid biosynthesis; L-arginine biosynthesis; N(2)-acetyl-L-ornithine from L-glutamate: step 2/4. Functionally, catalyzes the ATP-dependent phosphorylation of N-acetyl-L-glutamate. In Bradyrhizobium diazoefficiens (strain JCM 10833 / BCRC 13528 / IAM 13628 / NBRC 14792 / USDA 110), this protein is Acetylglutamate kinase.